We begin with the raw amino-acid sequence, 60 residues long: UPF0434 protein Daci_3569 (60 aa).

It belongs to the UPF0434 family.

This Delftia acidovorans (strain DSM 14801 / SPH-1) protein is UPF0434 protein Daci_3569.